Here is a 223-residue protein sequence, read N- to C-terminus: ATP-dependent dethiobiotin synthetase BioD (223 aa).

A Mg(2+)-binding site is contributed by T16. K37 is a catalytic residue. S41 provides a ligand contact to substrate. 2 residues coordinate Mg(2+): D50 and E111. ATP-binding positions include D50, 111-114 (EGAG), and 171-172 (NR).

The protein belongs to the dethiobiotin synthetase family. Homodimer. The cofactor is Mg(2+).

The protein localises to the cytoplasm. The enzyme catalyses (7R,8S)-7,8-diammoniononanoate + CO2 + ATP = (4R,5S)-dethiobiotin + ADP + phosphate + 3 H(+). It participates in cofactor biosynthesis; biotin biosynthesis; biotin from 7,8-diaminononanoate: step 1/2. Functionally, catalyzes a mechanistically unusual reaction, the ATP-dependent insertion of CO2 between the N7 and N8 nitrogen atoms of 7,8-diaminopelargonic acid (DAPA, also called 7,8-diammoniononanoate) to form a ureido ring. The polypeptide is ATP-dependent dethiobiotin synthetase BioD (Anaeromyxobacter dehalogenans (strain 2CP-C)).